A 177-amino-acid chain; its full sequence is MNASHPAVHPVGVPPAVAGQLPPRMRMKEIQGMPGTIGGLLLRLGQFCFALVAFSIMVSIENFSTVTAFCYLVAATVLQCLWSLALAIIDGYALLVKRSLRNSLLVSLLVVGDGVTATLTFAAACASAGITVLIGNDLRQCKENHCARYETATALAFLSWFMVSLSFILTFWLLATR.

The Cytoplasmic portion of the chain corresponds to 1 to 36 (MNASHPAVHPVGVPPAVAGQLPPRMRMKEIQGMPGT). A helical transmembrane segment spans residues 37–57 (IGGLLLRLGQFCFALVAFSIM). At 58–68 (VSIENFSTVTA) the chain is on the extracellular side. N-linked (GlcNAc...) asparagine glycosylation is present at N62. Residues 69 to 89 (FCYLVAATVLQCLWSLALAII) traverse the membrane as a helical segment. Residues 90–103 (DGYALLVKRSLRNS) are Cytoplasmic-facing. The chain crosses the membrane as a helical span at residues 104–124 (LLVSLLVVGDGVTATLTFAAA). Topologically, residues 125 to 153 (CASAGITVLIGNDLRQCKENHCARYETAT) are extracellular. The chain crosses the membrane as a helical span at residues 154 to 174 (ALAFLSWFMVSLSFILTFWLL). Topologically, residues 175–177 (ATR) are cytoplasmic.

It belongs to the Casparian strip membrane proteins (CASP) family. Homodimer and heterodimers.

Its subcellular location is the cell membrane. The chain is CASP-like protein 5A2 from Ginkgo biloba (Ginkgo).